Consider the following 436-residue polypeptide: ATP-dependent 6-phosphofructokinase (436 aa).

ATP-binding positions include G90, 155-156, and 180-183; these read RG and GDGT. Position 181 (D181) interacts with Mg(2+). Residues 209-211, 254-256, E307, and 362-365 each bind substrate; these read TID, MGR, and YMIR. The active-site Proton acceptor is D211.

Belongs to the phosphofructokinase type A (PFKA) family. PPi-dependent PFK group II subfamily. Atypical ATP-dependent clade 'X' sub-subfamily. In terms of assembly, homodimer. Aggregates to a homotetramer after activation by ATP. The cofactor is Mg(2+).

It localises to the cytoplasm. It catalyses the reaction beta-D-fructose 6-phosphate + ATP = beta-D-fructose 1,6-bisphosphate + ADP + H(+). Its pathway is carbohydrate degradation; glycolysis; D-glyceraldehyde 3-phosphate and glycerone phosphate from D-glucose: step 3/4. With respect to regulation, activated by nucleoside triphosphates. Inhibited by phosphoenolpyruvate. EDTA and biphosphonates play the role of inhibitors of kinase activity. Functionally, catalyzes the phosphorylation of D-fructose 6-phosphate to fructose 1,6-bisphosphate by ATP, the first committing step of glycolysis. The protein is ATP-dependent 6-phosphofructokinase (PPi-PFK) of Entamoeba histolytica (strain ATCC 30459 / HM-1:IMSS / ABRM).